A 449-amino-acid chain; its full sequence is Chlorobenzene dioxygenase subunit alpha (449 aa).

A Rieske domain is found at 54–163; that stretch reads WLLLGHETQI…VATYKGLIFA (110 aa). Residues C96, H98, C116, and H119 each coordinate [2Fe-2S] cluster. Fe cation-binding residues include H222, H228, and D376.

This sequence belongs to the bacterial ring-hydroxylating dioxygenase alpha subunit family. This dioxygenase system consists of four proteins: the two subunits of the oxygenase component (TecA1 and TecA2), a ferredoxin (TecA3) and a ferredoxin reductase (TecA4). Requires [2Fe-2S] cluster as cofactor. Fe cation serves as cofactor.

It carries out the reaction chlorobenzene + NADH + O2 + H(+) = (1R,2R)-3-chlorocyclohexa-3,5-diene-1,2-diol + NAD(+). It participates in aromatic compound metabolism. Functionally, part of the oxygenase component of the chlorobenzene dioxygenase system that catalyzes the dihydroxylation of a range of aromatic compounds, including chlorinated benzenes and toluenes, and dinuclear aromatics such as biphenyl and dibenzo-p-dioxin. The alpha subunit is responsible for substrate specificity. The chain is Chlorobenzene dioxygenase subunit alpha from Cupriavidus sp. (strain PS12).